Reading from the N-terminus, the 286-residue chain is Translocon-associated protein subunit alpha (286 aa).

Positions 1-21 are cleaved as a signal peptide; that stretch reads MRLLPRLLLLFLLAFPAAVLL. The Lumenal segment spans residues 22–207; the sequence is RGGPGGSLAL…EREDGLDGET (186 aa). Over residues 46 to 75 the composition is skewed to acidic residues; it reads IIEDEDDEAEVEEDEPTDLAEDKEEEDVSS. A disordered region spans residues 46–83; that stretch reads IIEDEDDEAEVEEDEPTDLAEDKEEEDVSSEPEASPSA. Residues Asn-136 and Asn-191 are each glycosylated (N-linked (GlcNAc...) asparagine). The chain crosses the membrane as a helical span at residues 208 to 228; that stretch reads IFMYMFLAGLGLLVVVGLHQL. Topologically, residues 229-286 are cytoplasmic; it reads LESRKRKRPIQKVEMGTSSQNDVDMSWIPQETLNQINKASPRRQPRKRAQKRSVGSDE. A disordered region spans residues 236-286; sequence RPIQKVEMGTSSQNDVDMSWIPQETLNQINKASPRRQPRKRAQKRSVGSDE. Residues 244–266 show a composition bias toward polar residues; that stretch reads GTSSQNDVDMSWIPQETLNQINK. The residue at position 247 (Ser-247) is a Phosphoserine. The residue at position 260 (Thr-260) is a Phosphothreonine. At Ser-268 the chain carries Phosphoserine. A compositionally biased stretch (basic residues) spans 268-279; sequence SPRRQPRKRAQK.

This sequence belongs to the TRAP-alpha family. In terms of assembly, heterotetramer of TRAP-alpha, TRAP-beta, TRAP-delta and TRAP-gamma. Interacts with palmitoylated calnexin (CALX), the interaction is required for efficient folding of glycosylated proteins.

It is found in the endoplasmic reticulum membrane. Its function is as follows. TRAP proteins are part of a complex whose function is to bind calcium to the ER membrane and thereby regulate the retention of ER resident proteins. May be involved in the recycling of the translocation apparatus after completion of the translocation process or may function as a membrane-bound chaperone facilitating folding of translocated proteins. In Mus musculus (Mouse), this protein is Translocon-associated protein subunit alpha (Ssr1).